Reading from the N-terminus, the 129-residue chain is Small ribosomal subunit protein uS11 (129 aa).

The protein belongs to the universal ribosomal protein uS11 family. In terms of assembly, part of the 30S ribosomal subunit. Interacts with proteins S7 and S18. Binds to IF-3.

Located on the platform of the 30S subunit, it bridges several disparate RNA helices of the 16S rRNA. Forms part of the Shine-Dalgarno cleft in the 70S ribosome. The protein is Small ribosomal subunit protein uS11 of Bartonella henselae (strain ATCC 49882 / DSM 28221 / CCUG 30454 / Houston 1) (Rochalimaea henselae).